We begin with the raw amino-acid sequence, 428 residues long: CinA-like protein (428 aa).

Belongs to the CinA family.

The sequence is that of CinA-like protein from Chlorobium phaeovibrioides (strain DSM 265 / 1930) (Prosthecochloris vibrioformis (strain DSM 265)).